The chain runs to 363 residues: Dihydroorotate dehydrogenase (quinone) (363 aa).

FMN contacts are provided by residues 67-71 and T91; that span reads AGYDK. A substrate-binding site is contributed by K71. 116-120 is a binding site for substrate; the sequence is NRMGF. FMN contacts are provided by N145 and N178. N178 provides a ligand contact to substrate. S181 functions as the Nucleophile in the catalytic mechanism. Residue N183 participates in substrate binding. The FMN site is built by K224 and T254. 255-256 serves as a coordination point for substrate; it reads NT. FMN-binding positions include G275, G304, and 325-326; that span reads YS.

This sequence belongs to the dihydroorotate dehydrogenase family. Type 2 subfamily. Monomer. It depends on FMN as a cofactor.

It localises to the cell membrane. The enzyme catalyses (S)-dihydroorotate + a quinone = orotate + a quinol. The protein operates within pyrimidine metabolism; UMP biosynthesis via de novo pathway; orotate from (S)-dihydroorotate (quinone route): step 1/1. In terms of biological role, catalyzes the conversion of dihydroorotate to orotate with quinone as electron acceptor. This is Dihydroorotate dehydrogenase (quinone) from Acidithiobacillus ferrooxidans (strain ATCC 23270 / DSM 14882 / CIP 104768 / NCIMB 8455) (Ferrobacillus ferrooxidans (strain ATCC 23270)).